Consider the following 217-residue polypeptide: Orotidine 5'-phosphate decarboxylase (217 aa).

Residues aspartate 14, lysine 36, 64-73, serine 120, 172-182, glycine 197, and arginine 198 each bind substrate; these read DFKVADIPST and PGVGAQGGNLS. Lysine 66 functions as the Proton donor in the catalytic mechanism.

It belongs to the OMP decarboxylase family. Type 1 subfamily. In terms of assembly, homodimer.

The enzyme catalyses orotidine 5'-phosphate + H(+) = UMP + CO2. It functions in the pathway pyrimidine metabolism; UMP biosynthesis via de novo pathway; UMP from orotate: step 2/2. Catalyzes the decarboxylation of orotidine 5'-monophosphate (OMP) to uridine 5'-monophosphate (UMP). This chain is Orotidine 5'-phosphate decarboxylase, found in Methanococcus maripaludis (strain C6 / ATCC BAA-1332).